A 2273-amino-acid chain; its full sequence is MRILFLTTFMSKGNKVVRYLESLHHEVVICQEKVHAQSANLQEIDWIVSYAYGYILDKEIVSRFRGRIINLHPSLLPWNKGRDPVFWSVWDETPKGVTIHLIDEHVDTGDILVQEEIAFADEDTLLDCYNKANQAIEELFIREWENIVHGRIAPYRQTAGGTLHFKADRDFYKNLNMTTVRELLALKRLCAEPKRGEKPIDKTFHQLFEQQVEMTPDHVAVVDRGQSLTYKQLNERANQLAHHLRGKGVKPDDQVAIMLDKSLDMIVSILAVMKAGGAYVPIDPDYPGERIAYMLADSSAAILLTNALHEEKANGACDIIDVHDPDSYSENTNNLPHVNRPDDLVYVMYTSGSTGLAKGVMIEHHNLVNFCEWYRPYFGVTPADKALVYSSFSFDGSALDIFTHLLAGAALHIVPSERKYDLDALNDYCNQEGITISYLPTGAAEQFMQMDNQSFRVVITGGDVLKKIERNGTYKLYNGYGPTECTIMVTMFEVDKPYANIPIGKPIDRTRILILDEALALQPIGVAGELFIVGEGLGRGYLNRPELTAEKFIVHPQTGERMYRTGDRARFLPDGNIEFLGRLDNLVKIRGYRIEPGEIEPFLMNHPLIELTTVLAKEQADGRKYLVGYYVAPEEIPHGELREWLGNDLPDYMIPTYFVHMKAFPLTANGKVDRRALPDVQADAELLGEDYVAPTDELEQQLAQVWSHVLGIPQMGIDDHFLERGGDSIKVMQLIHQLKNIGLSLRYDQLFTHPTIRQLKRLLTEQKQVSLEPLRELDEQAEYETSAVEKRMYIIQQQDVESIAYNVVYTINFPLTVDTEQIRVALEQLVLRHEGLRSTYHMRGDEIVKRIVPRAELSFVRQTGEEESVQSLLAEQIKPFDLAKAPLLRAGVIETADKKVLWFDSHHILLDGLSKSILARELQALLGQQVLSPVEKTYKSFARWQNEWFASDEYEQQIAYWKTLLQGELPAVQLPTKKRPPQLTFDGAIQMYRVNPEITRKLKATAAKHDLTLYMLMLTIVSIWLSKMNSDSNQVILGTVTDGRQHPDTRELLGMFVNTLPLLLSIDHEESFLHNLQQVKAKLLPALQNQYVPFDKILEAARVKREGNRHPLFDVMFMMQGAPETELESNMHHINAGISKFDLTLEVLERENGLNIVFEYNTHLFDEGMILRMVAQFEHLLLQAVHGLDQQVKRFELVTEDEKRDLFLRVNDTAKAYPNKLIMSMLEDWAAATPDKTALVFREQRVTYRELNERVNQLAHTLREKGVQPDDLVMLMAERSVEMMVAIFAVLKAGGAYLPIDPHSPAERIAYIFADSGAKLVLAQSPFVEKASMAEVVLDLNSASSYAADTSNPPLVNQPGDLVYVMYTSGSTGKPKGVMIEHGALLNVLHGMQDEYPLLQDDAFLLKTTYIFDISVAEIFGWVPGRGKLVILEPEAEKNPKAIWQAVVGAGITHINFVPSMLIPFVEYLEGRTEANRLRYILACGEAMPDELVPKVYEVLPEVKLENIYGPTEATIYASRYSLAKGSQESPVPIGKPLPNYRMYIINRHGQLQPIGVPGELCIAGASLARGYLNNPALTEEKFTPHPLEKGERIYRTGDLARYREDGNIEYLGRMDHQVKIRGYRIELDEIRSKLIQEETIQDAVVVARNDQNGQAYLCAYLLSEQEWTVGQLRELLRRELPEYMIPAHFVLLKQFPLTANGKLDRKALPEPDGSVKAEAEYAAPRTELEATLAHIWGEVLGIERIGIRDNFFELGGDSIKGLQIASRLQRINWTMVINHLFLYPTIEQIAPFVTSEQVVIEQGLVEGLVKLTPIQRDFFERITADRHHWNQARMLFCRDGLEREWVVETLNALVLQHDALRMRFRETEQGIVQFHQGNEGKLFGFHVFDCTEELDIAKKVEEQANVLQSGMNLQEGPLVQAALFMTRTGDHLLLAIHQLVVDEASWRIILEDFQTAYKQKAAGEPIALPNKTHSYQSWAEELHNAANSKKLTSELGYWRKIASSPTRPLPQDQEPLSRTEQSTATAAIRFAKAETANLLHEANHAYQTEAQELLLAALGMALRDWTRADDVTVFLEKDGRESAAKGLDVSRTVGWFHSLFPVVLSAARSGDPGEQIKQVKEMLRAIPHQGSGYSILKQLTDLRHKHPDDFTLQPKIVVHAWEQLDAGLETDWLTLSHLPQGSVRGANAERMQQLDVFSKISNGELTIHIQYHRDEYRKATIDKLLELYQAHLNALLAHCLQKTETELTPSDFVDKNLSRSELDDIMDLISDL.

The segment at 1 to 144 (MRILFLTTFM…AIEELFIREW (144 aa)) is GART. 2 Carrier domains span residues 693–767 (APTD…TEQK) and 1724–1798 (APRT…TSEQ). Residues S728 and S1759 each carry the O-(pantetheine 4'-phosphoryl)serine modification.

The protein belongs to the ATP-dependent AMP-binding enzyme family. Large multienzyme complex composed of 4 subunits; LgrA, LgrB, LgrC and LgrD. Pantetheine 4'-phosphate serves as cofactor.

Its function is as follows. Activates valine (or leucine, but much less frequently), and then glycine and catalyzes the formation of the peptide bond in the first step of peptide synthesis. This enzyme may also play a role in N-formylation of the first amino acid residue in the synthesized dipeptide. The chain is Linear gramicidin synthase subunit A (lgrA) from Brevibacillus parabrevis.